The following is a 334-amino-acid chain: N-acetyl-gamma-glutamyl-phosphate reductase (334 aa).

Residue Cys154 is part of the active site.

This sequence belongs to the NAGSA dehydrogenase family. Type 1 subfamily.

It is found in the cytoplasm. It catalyses the reaction N-acetyl-L-glutamate 5-semialdehyde + phosphate + NADP(+) = N-acetyl-L-glutamyl 5-phosphate + NADPH + H(+). Its pathway is amino-acid biosynthesis; L-arginine biosynthesis; N(2)-acetyl-L-ornithine from L-glutamate: step 3/4. Its function is as follows. Catalyzes the NADPH-dependent reduction of N-acetyl-5-glutamyl phosphate to yield N-acetyl-L-glutamate 5-semialdehyde. This chain is N-acetyl-gamma-glutamyl-phosphate reductase, found in Salmonella typhi.